The chain runs to 174 residues: Transcription antitermination protein NusB (174 aa).

The segment covering methionine 1–threonine 11 has biased composition (polar residues). The disordered stretch occupies residues methionine 1–alanine 29.

It belongs to the NusB family.

Functionally, involved in transcription antitermination. Required for transcription of ribosomal RNA (rRNA) genes. Binds specifically to the boxA antiterminator sequence of the ribosomal RNA (rrn) operons. The polypeptide is Transcription antitermination protein NusB (Marinomonas sp. (strain MWYL1)).